Consider the following 835-residue polypeptide: MKVLALRHSVAQVYADTQIYTHDETKDDYENAFLISNLTTHNILYLNYSVKTLQILNKSGIAAVEIQKMDELFTLIRCNFTYDYIDDIVYLHDYSYYTNNEIRTDQHWVTKTNIEDYLLPGWKLMYVGYNGNDTRGHYNFSFKCQNAATDDDAIIEYIYSNELDFQNFILKKIKERMTTSLPIARLSNRVFRDKLFKTLVSDHSRVVNVGPRNESMFTFLDHPSIKQFSNGPYLVKDTIKLKQERWLGKRLSQFDIGQYKNMLNVLTTLYQYYDMYHEKPIIYMVGSAPSYWIHDVKQYSDLKFETWDPLDTPYSDLHHKELFYASDVTKLKDNSILYVDIRTDRENADWKTWRKIVEEQTANNLNIAYKYLSTGKAKVCCVKMTAMDLELPISAKLLHHPTTEIRSEFYLIMDIWDSKNTKRFIPKGVLYSYINNTITENVFIQQPFKLRTLRNEYVVALYALSNDFNNREDVVKLVNNQKNALITVRINNTFKDEPKVGFKDIYDWTFLPTDFETNESIITSYDGCLGMFGLSISLASKPTGNNHLFILSGTNKYFKLDQFANHMSISRRSHQIRFSESATSYSGYIFRDLSNNNFNLIGTNVENSVSGHVYNALIYYRYNYSFDLKRWIYLHSTNKASIEGGRYYEHAPIELIYACRSAREFAKLQDDLTVLRYSNEIENYINKVYSITYADDPNYFIGIKFKNIPYEYDVKVPHLTFGVLNISDSMVPDVVAILKKFKNELFRMDVTTSYTYMLSDEIYVANVSGVLSTYFKLYNAFYKEQITFGQSRMFIPHITLSFSNKRVVRIGSTRLNIDFIYLRKIKGDTVFDMTE.

Residues 171–245 (KKIKERMTTS…KDTIKLKQER (75 aa)) form an N7-methyltransferase activity region. The segment at 246-428 (WLGKRLSQFD…KNTKRFIPKG (183 aa)) is 2'-O-methyltransferase activity. The N7-methyltransferase activity stretch occupies residues 429–555 (VLYSYINNTI…NHLFILSGTN (127 aa)). The interval 556 to 692 (KYFKLDQFAN…NYINKVYSIT (137 aa)) is GTase/RTPase activity. The segment at 693–835 (YADDPNYFIG…KGDTVFDMTE (143 aa)) is 2'-5'-phosphodiesterase activity. Active-site for 2'-5'-phosphodiesterase activity residues include His-718, Thr-720, His-797, and Thr-799.

It belongs to the rotavirus VP3 family. As to quaternary structure, interacts with VP1. Interacts with VP2.

It is found in the virion. The enzyme catalyses a 5'-end diphospho-ribonucleoside in mRNA + GTP + H(+) = a 5'-end (5'-triphosphoguanosine)-ribonucleoside in mRNA + diphosphate. The catalysed reaction is a 5'-end (5'-triphosphoguanosine)-ribonucleoside in mRNA + S-adenosyl-L-methionine = a 5'-end (N(7)-methyl 5'-triphosphoguanosine)-ribonucleoside in mRNA + S-adenosyl-L-homocysteine. It catalyses the reaction 5'-triphosphoadenylyl-(2'-&gt;5')-adenylyl-(2'-&gt;5')-adenosine + 2 H2O = 2 AMP + ATP + 2 H(+). In terms of biological role, multifunctional enzyme involved in mRNA capping. Catalyzes the formation of the 5' cap structure on the viral plus-strand transcripts. Specifically binds to GTP and displays guanylyltransferase and methyltransferase activities. Has affinity for ssRNA but not for dsRNA. Capping activity is non-specific and caps RNAs that initiate with either a G or an A residue. Together with VP1 polymerase, forms a VP1-VP3 complex positioned near the channels situated at each of the five-fold vertices of the core. Following infection, the outermost layer of the virus is lost, leaving a double-layered particle (DLP) made up of the core and VP6 shell. VP1 then catalyzes the transcription of fully conservative plus-strand genomic RNAs that are capped by VP3 and extruded through the DLP's channels into the cytoplasm where they function as mRNAs for translation of viral proteins. DLPs probably have an RNA triphosphatase activity as well, whereas open cores do not. Functionally, counteracts the host innate immune response thanks to its phosphodiesterase that degrades the 5'-triphosphorylated, 2'-5' linked adenylate oligomers produced by the host cell IFN-inducible 2',5'-oligoadenylate synthetase (OAS). The host RNaseL is therefore not activated. The protein is Protein VP3 of Bos taurus (Bovine).